Here is a 486-residue protein sequence, read N- to C-terminus: Envelope glycoprotein gp63 (486 aa).

The N-terminal stretch at 1–18 is a signal peptide; sequence MGNVFFLLLFSLTHFPLA. Residues 19–438 are Extracellular-facing; sequence QQSRCTLTIG…LGLSQWAREA (420 aa). Residues asparagine 136 and asparagine 218 are each glycosylated (N-linked (GlcNAc...) asparagine; by host). The short motif at 221–224 is the CXXC element; sequence CMVC. Disulfide bonds link cysteine 221-cysteine 224, cysteine 221-cysteine 397, and cysteine 389-cysteine 396. N-linked (GlcNAc...) asparagine; by host glycosylation is found at asparagine 240 and asparagine 286. Residues 309–329 are fusion peptide; that stretch reads AVPIAVWLVSALAAGTGIAGG. Coiled-coil stretches lie at residues 337-383 and 393-425; these read ASSK…LLFW and QEQC…GWGL. The immunosuppression stretch occupies residues 372–388; the sequence is AQNRRGLDLLFWEQGGL. The short motif at 389–397 is the CX6CC element; the sequence is CKAIQEQCC. The N-linked (GlcNAc...) asparagine; by host glycan is linked to asparagine 400. The helical transmembrane segment at 439–459 threads the bilayer; it reads LQTGITILALLLLVILFGPCI. Residue cysteine 458 is the site of S-palmitoyl cysteine; by host attachment. Over 460-486 the chain is Cytoplasmic; that stretch reads LRQIQALPQRLQNRHNQYSLINPETML.

As to quaternary structure, the mature envelope protein (Env) consists of a trimer of SU-TM heterodimers attached by a labile interchain disulfide bond. Specific enzymatic cleavages in vivo yield mature proteins. Envelope glycoproteins are synthesized as an inactive precursor that is N-glycosylated and processed likely by host cell furin or by a furin-like protease in the Golgi to yield the mature SU and TM proteins. The cleavage site between SU and TM requires the minimal sequence [KR]-X-[KR]-R. Post-translationally, the CXXC motif is highly conserved across a broad range of retroviral envelope proteins. It is thought to participate in the formation of a labile disulfide bond possibly with the CX6CC motif present in the transmembrane protein. Isomerization of the intersubunit disulfide bond to an SU intrachain disulfide bond is thought to occur upon receptor recognition in order to allow membrane fusion. In terms of processing, the transmembrane protein is palmitoylated.

It is found in the virion membrane. The protein localises to the host cell membrane. Functionally, the surface protein (SU) attaches the virus to the host cell by binding to its receptor. This interaction triggers the refolding of the transmembrane protein (TM) and is thought to activate its fusogenic potential by unmasking its fusion peptide. Fusion occurs at the host cell plasma membrane. In terms of biological role, the transmembrane protein (TM) acts as a class I viral fusion protein. Under the current model, the protein has at least 3 conformational states: pre-fusion native state, pre-hairpin intermediate state, and post-fusion hairpin state. During viral and target cell membrane fusion, the coiled coil regions (heptad repeats) assume a trimer-of-hairpins structure, positioning the fusion peptide in close proximity to the C-terminal region of the ectodomain. The formation of this structure appears to drive apposition and subsequent fusion of viral and target cell membranes. Membranes fusion leads to delivery of the nucleocapsid into the cytoplasm. The sequence is that of Envelope glycoprotein gp63 (env) from Homo sapiens (Human).